We begin with the raw amino-acid sequence, 968 residues long: Protein translocase subunit SecA (968 aa).

Residues Q86, 104–108 (GEGKT), and D494 each bind ATP. Residues 835 to 968 (PAESAEESTD…RAAKAAKKRR (134 aa)) form a disordered region. Composition is skewed to low complexity over residues 883 to 892 (ARVATRPAAE) and 910 to 923 (SAPS…FSEG). Over residues 956–968 (ARRRAAKAAKKRR) the composition is skewed to basic residues.

This sequence belongs to the SecA family. As to quaternary structure, monomer and homodimer. Part of the essential Sec protein translocation apparatus which comprises SecA, SecYEG and auxiliary proteins SecDF. Other proteins may also be involved.

It localises to the cell membrane. Its subcellular location is the cytoplasm. The catalysed reaction is ATP + H2O + cellular proteinSide 1 = ADP + phosphate + cellular proteinSide 2.. Functionally, part of the Sec protein translocase complex. Interacts with the SecYEG preprotein conducting channel. Has a central role in coupling the hydrolysis of ATP to the transfer of proteins into and across the cell membrane, serving as an ATP-driven molecular motor driving the stepwise translocation of polypeptide chains across the membrane. This is Protein translocase subunit SecA from Beutenbergia cavernae (strain ATCC BAA-8 / DSM 12333 / CCUG 43141 / JCM 11478 / NBRC 16432 / NCIMB 13614 / HKI 0122).